Reading from the N-terminus, the 260-residue chain is Glutamate racemase (260 aa).

Substrate-binding positions include 14 to 15 and 46 to 47; these read DS and YG. The active-site Proton donor/acceptor is the cysteine 77. Position 78 to 79 (78 to 79) interacts with substrate; that stretch reads NT. Cysteine 188 acts as the Proton donor/acceptor in catalysis. 189–190 is a binding site for substrate; it reads TH.

Belongs to the aspartate/glutamate racemases family.

It catalyses the reaction L-glutamate = D-glutamate. It functions in the pathway cell wall biogenesis; peptidoglycan biosynthesis. Provides the (R)-glutamate required for cell wall biosynthesis. The protein is Glutamate racemase of Clostridium perfringens (strain ATCC 13124 / DSM 756 / JCM 1290 / NCIMB 6125 / NCTC 8237 / Type A).